A 191-amino-acid chain; its full sequence is MTSVSIHPSVDGGVARGGAEGFQGGTLECHCASDKVTVEVSAQTAHNHACGCSKCWKPDGAKFSVVAVVPRDNVEVTAHQEKLKIVDESATIQRHACTGCGVHLYGRIENKDHAFYGLDFVHTELSKQQGWSAPGFAAFVSSIIETGTPPEQMDEVRARLTELGLPPYDCLSPALMDALSAHVARKKGLLH.

The region spanning 22–169 (FQGGTLECHC…LTELGLPPYD (148 aa)) is the CENP-V/GFA domain. Cysteine 29, cysteine 31, cysteine 50, cysteine 52, cysteine 55, cysteine 97, and cysteine 100 together coordinate Zn(2+).

It belongs to the Gfa family. It depends on Zn(2+) as a cofactor.

It catalyses the reaction S-(hydroxymethyl)glutathione = glutathione + formaldehyde. It participates in one-carbon metabolism; formaldehyde degradation; formate from formaldehyde (glutathione route): step 1/3. Functionally, catalyzes the condensation of formaldehyde and glutathione to S-hydroxymethylglutathione. The chain is Glutathione-dependent formaldehyde-activating enzyme from Xanthomonas axonopodis pv. citri (strain 306).